Consider the following 312-residue polypeptide: Protein phosphatase PTC7 homolog fig (312 aa).

Positions 42–306 constitute a PPM-type phosphatase domain; that stretch reads IQGSSKDQLA…DDITVILASV (265 aa). Residues Asp-83, Gly-84, and Asp-228 each contribute to the Mn(2+) site.

This sequence belongs to the PP2C family. The cofactor is Mg(2+). It depends on Mn(2+) as a cofactor.

The enzyme catalyses O-phospho-L-seryl-[protein] + H2O = L-seryl-[protein] + phosphate. It carries out the reaction O-phospho-L-threonyl-[protein] + H2O = L-threonyl-[protein] + phosphate. The chain is Protein phosphatase PTC7 homolog fig from Drosophila mojavensis (Fruit fly).